Here is a 484-residue protein sequence, read N- to C-terminus: Trigger factor (484 aa).

The PPIase FKBP-type domain occupies 165–244; it reads GDFVQIDLTA…VQSVKERELP (80 aa). The interval 429 to 484 is disordered; sequence DAVSEEPADADAEAVVADAPAEEAAEAPAAEEAPAEKPKKKAPAKKKASEKAADSE. The span at 430–440 shows a compositional bias: acidic residues; it reads AVSEEPADADA. Over residues 475 to 484 the composition is skewed to basic and acidic residues; the sequence is KASEKAADSE.

It belongs to the FKBP-type PPIase family. Tig subfamily.

The protein resides in the cytoplasm. It catalyses the reaction [protein]-peptidylproline (omega=180) = [protein]-peptidylproline (omega=0). In terms of biological role, involved in protein export. Acts as a chaperone by maintaining the newly synthesized protein in an open conformation. Functions as a peptidyl-prolyl cis-trans isomerase. This is Trigger factor from Clavibacter michiganensis subsp. michiganensis (strain NCPPB 382).